Reading from the N-terminus, the 266-residue chain is uncharacterized protein (266 aa).

2 disordered regions span residues 50 to 116 (GGSR…DFAD) and 128 to 224 (EEER…PTSG). The span at 78–90 (APDPPAGNQPPAL) shows a compositional bias: pro residues. Residues 94–108 (GDGGNESGAGGGESG) show a composition bias toward gly residues. Basic and acidic residues predominate over residues 129-161 (EERRLQYPRETTKRTETVDERKRERSRSPRRDA). Residues 166 to 176 (PRAAPAAAPRA) are compositionally biased toward low complexity.

This is an uncharacterized protein from Homo sapiens (Human).